The chain runs to 395 residues: Phosphopentomutase (395 aa).

Residues D14, D286, H291, D327, H328, and H339 each contribute to the Mn(2+) site.

The protein belongs to the phosphopentomutase family. Requires Mn(2+) as cofactor.

The protein resides in the cytoplasm. The enzyme catalyses 2-deoxy-alpha-D-ribose 1-phosphate = 2-deoxy-D-ribose 5-phosphate. It carries out the reaction alpha-D-ribose 1-phosphate = D-ribose 5-phosphate. It participates in carbohydrate degradation; 2-deoxy-D-ribose 1-phosphate degradation; D-glyceraldehyde 3-phosphate and acetaldehyde from 2-deoxy-alpha-D-ribose 1-phosphate: step 1/2. In terms of biological role, isomerase that catalyzes the conversion of deoxy-ribose 1-phosphate (dRib-1-P) and ribose 1-phosphate (Rib-1-P) to deoxy-ribose 5-phosphate (dRib-5-P) and ribose 5-phosphate (Rib-5-P), respectively. This is Phosphopentomutase from Staphylococcus haemolyticus (strain JCSC1435).